The chain runs to 82 residues: Putative Fe(2+) transport protein A (82 aa).

This sequence belongs to the FeoA family.

Might be involved in Fe(2+) ion uptake. The protein is Putative Fe(2+) transport protein A of Leptolyngbya boryana (Plectonema boryanum).